A 67-amino-acid chain; its full sequence is Large ribosomal subunit protein uL29 (67 aa).

The protein belongs to the universal ribosomal protein uL29 family.

In Magnetococcus marinus (strain ATCC BAA-1437 / JCM 17883 / MC-1), this protein is Large ribosomal subunit protein uL29.